The chain runs to 214 residues: Probable transaldolase (214 aa).

Catalysis depends on K83, which acts as the Schiff-base intermediate with substrate.

The protein belongs to the transaldolase family. Type 3B subfamily.

Its subcellular location is the cytoplasm. The catalysed reaction is D-sedoheptulose 7-phosphate + D-glyceraldehyde 3-phosphate = D-erythrose 4-phosphate + beta-D-fructose 6-phosphate. It participates in carbohydrate degradation; pentose phosphate pathway; D-glyceraldehyde 3-phosphate and beta-D-fructose 6-phosphate from D-ribose 5-phosphate and D-xylulose 5-phosphate (non-oxidative stage): step 2/3. In terms of biological role, transaldolase is important for the balance of metabolites in the pentose-phosphate pathway. The protein is Probable transaldolase of Clostridium botulinum (strain Alaska E43 / Type E3).